The sequence spans 808 residues: N-terminal kinase-like protein (808 aa).

In terms of domain architecture, Protein kinase spans 14-314 (FELIPEPPEG…PEDFCRHKVL (301 aa)). HEAT repeat units lie at residues 350–388 (IIPV…VNTQ), 389–427 (IFPH…LNVE), and 507–545 (ILPV…EDPT). Disordered stretches follow at residues 540 to 566 (VSED…GGAA), 587 to 646 (SHPT…RWDD), and 658 to 808 (SVLA…RKLD). Residues 556 to 566 (AASSPGMGGAA) show a composition bias toward low complexity. Residues 587 to 600 (SHPTTAPTETNIPQ) show a composition bias toward polar residues. The segment covering 601–617 (RPTPEGVPAPAPTPVPA) has biased composition (pro residues). Residues 660-680 (LAQQDDWSTGGQVSRASQVSN) show a composition bias toward polar residues. Over residues 681–690 (SDHKSSKSPE) the composition is skewed to basic and acidic residues. Phosphoserine is present on S754. Residues 755–764 (WGEDNWEGLE) are compositionally biased toward acidic residues. Residues 761–797 (EGLETDSRQVKAELARKKREERRREMEAKRAERKVAK) adopt a coiled-coil conformation. 2 stretches are compositionally biased toward basic and acidic residues: residues 765–775 (TDSRQVKAELA) and 782–795 (RRRE…ERKV). An interaction with COPB1 region spans residues 793–808 (RKVAKGPMKLGARKLD).

It belongs to the protein kinase superfamily. Interacts with GORAB. Interacts with COPA, COPB1 and COPB2. Homooligomer. Interacts with AP2B1. Ubiquitous.

It is found in the cytoplasm. The protein localises to the cytoskeleton. It localises to the microtubule organizing center. The protein resides in the centrosome. Its subcellular location is the endoplasmic reticulum-Golgi intermediate compartment. It is found in the golgi apparatus. The protein localises to the cis-Golgi network. It localises to the nucleus. In terms of biological role, regulates COPI-mediated retrograde protein traffic at the interface between the Golgi apparatus and the endoplasmic reticulum. Involved in the maintenance of the Golgi apparatus morphology. Functionally, acts as a transcriptional activator. It binds to three different types of GC-rich DNA binding sites (box-A, -B and -C) in the beta-polymerase promoter region. It also binds to the TERT promoter region. The chain is N-terminal kinase-like protein (SCYL1) from Homo sapiens (Human).